The following is a 254-amino-acid chain: Phosphatidylglycerol--prolipoprotein diacylglyceryl transferase (254 aa).

A run of 4 helical transmembrane segments spans residues Leu-11–Ala-31, Phe-49–Phe-69, Gln-84–Leu-104, and Glu-109–Gly-129. Arg-130 contributes to the a 1,2-diacyl-sn-glycero-3-phospho-(1'-sn-glycerol) binding site. Transmembrane regions (helical) follow at residues Pro-169–Leu-189, Gly-196–Leu-216, and Val-228–Ile-248.

Belongs to the Lgt family.

It localises to the cell membrane. It carries out the reaction L-cysteinyl-[prolipoprotein] + a 1,2-diacyl-sn-glycero-3-phospho-(1'-sn-glycerol) = an S-1,2-diacyl-sn-glyceryl-L-cysteinyl-[prolipoprotein] + sn-glycerol 1-phosphate + H(+). It functions in the pathway protein modification; lipoprotein biosynthesis (diacylglyceryl transfer). Its function is as follows. Catalyzes the transfer of the diacylglyceryl group from phosphatidylglycerol to the sulfhydryl group of the N-terminal cysteine of a prolipoprotein, the first step in the formation of mature lipoproteins. In Clostridium botulinum (strain ATCC 19397 / Type A), this protein is Phosphatidylglycerol--prolipoprotein diacylglyceryl transferase.